A 166-amino-acid polypeptide reads, in one-letter code: Ribosome biogenesis regulatory protein homolog (166 aa).

A phosphoserine mark is found at serine 34 and serine 64. The interval 144 to 166 (KEKKLTSKQVRNTSKKIKRSRRH) is disordered. Residues 156 to 166 (TSKKIKRSRRH) are compositionally biased toward basic residues.

It belongs to the RRS1 family. As to quaternary structure, component of a hexameric 5S RNP precursor complex, composed of 5S RNA, rrs1, rpf2, rpl5a/rpl5b, rpl11a/rpl11b and syo1; this complex acts as a precursor for ribosome assembly. Interacts with sad1.

It is found in the nucleus. The protein localises to the nucleolus. Functionally, involved in ribosomal large subunit assembly. This chain is Ribosome biogenesis regulatory protein homolog, found in Schizosaccharomyces pombe (strain 972 / ATCC 24843) (Fission yeast).